Here is a 241-residue protein sequence, read N- to C-terminus: MKNIDNPSEKIIIALDGMDKDDVVNLLKKIPEIVWVKVGLELFVSEGPDVLSMLREKGKKIFLDLKFHDIPTTVARACFAASQTGAEFISLHTCAGMKALKMANEAANEGASKVNLIPPKLLGITILTSWTRESFCNDLLINQSIDQRVKHLAEIASNSGLGGCVCSPKEVQFLRESYPETFELITPGIRSLGSNVNDQSRVSDASEAIKMGASKLVIGRAITQSNDSAYMFKSFCDKISI.

Substrate is bound by residues Asp-16, Lys-37, 64–73, Thr-128, Arg-190, Gln-199, Gly-219, and Arg-220; that span reads DLKFHDIPTT. Residue Lys-66 is the Proton donor of the active site.

It belongs to the OMP decarboxylase family. Type 1 subfamily. Homodimer.

It catalyses the reaction orotidine 5'-phosphate + H(+) = UMP + CO2. Its pathway is pyrimidine metabolism; UMP biosynthesis via de novo pathway; UMP from orotate: step 2/2. Its function is as follows. Catalyzes the decarboxylation of orotidine 5'-monophosphate (OMP) to uridine 5'-monophosphate (UMP). This is Orotidine 5'-phosphate decarboxylase from Prochlorococcus marinus (strain NATL1A).